Here is a 62-residue protein sequence, read N- to C-terminus: Histone H1.2, embryonic (62 aa).

An H15 domain is found at 1 to 53; the sequence is HVVAAITALKERGGSSMKKQSVFIKKALKSGVEKGTLVQVKGKGASGSFKLGK.

The protein belongs to the histone H1/H5 family.

The protein localises to the nucleus. It is found in the chromosome. In terms of biological role, histones H1 are necessary for the condensation of nucleosome chains into higher-order structures. This Parechinus angulosus (Angulate sea urchin) protein is Histone H1.2, embryonic.